An 83-amino-acid chain; its full sequence is MADNTVTDVKKLSFERAIEELESIVKRLEDGKVPLEESVAIYERGEALKRRCEELLRQAEARVEKITTDASGRATGVAPLDVQ.

It belongs to the XseB family. Heterooligomer composed of large and small subunits.

The protein localises to the cytoplasm. The catalysed reaction is Exonucleolytic cleavage in either 5'- to 3'- or 3'- to 5'-direction to yield nucleoside 5'-phosphates.. Its function is as follows. Bidirectionally degrades single-stranded DNA into large acid-insoluble oligonucleotides, which are then degraded further into small acid-soluble oligonucleotides. The polypeptide is Exodeoxyribonuclease 7 small subunit (Bradyrhizobium sp. (strain BTAi1 / ATCC BAA-1182)).